The sequence spans 424 residues: Protein arginine N-methyltransferase 2 (424 aa).

Disordered regions lie at residues 67–89 (DEAQ…EQKS) and 151–212 (YEPL…SSRY). Positions 71–89 (TETNGVNGETSSASTEQKS) are enriched in polar residues. 2 stretches are compositionally biased toward low complexity: residues 163–173 (TGQGEDAANEP) and 187–201 (ETTA…ASTE). The region spanning 205–424 (PDVTSSRYLD…YRLPLCKFMD (220 aa)) is the RMT2 domain. Residues tyrosine 212, methionine 241, 261–266 (HGMGIV), 282–284 (EAH), 309–310 (WQ), and aspartate 329 each bind S-adenosyl-L-methionine.

This sequence belongs to the class I-like SAM-binding methyltransferase superfamily. RMT2 methyltransferase family. Monomer.

The protein resides in the cytoplasm. Its subcellular location is the nucleus. In terms of biological role, S-adenosyl-L-methionine-dependent protein-arginine N-methyltransferase that methylates the delta-nitrogen atom of arginine residues to form N5-methylarginine (type IV) in target proteins. Monomethylates ribosomal protein L12. In Aspergillus fumigatus (strain ATCC MYA-4609 / CBS 101355 / FGSC A1100 / Af293) (Neosartorya fumigata), this protein is Protein arginine N-methyltransferase 2.